The following is a 464-amino-acid chain: Arginine biosynthesis bifunctional protein ArgJ, chloroplastic (464 aa).

Substrate contacts are provided by Thr-208, Lys-234, Thr-245, Glu-332, Asn-459, and Thr-464. Thr-245 (nucleophile) is an active-site residue.

Belongs to the ArgJ family. Heterodimer of an alpha and a beta chain.

It is found in the plastid. It localises to the chloroplast. It carries out the reaction N(2)-acetyl-L-ornithine + L-glutamate = N-acetyl-L-glutamate + L-ornithine. It catalyses the reaction L-glutamate + acetyl-CoA = N-acetyl-L-glutamate + CoA + H(+). Its pathway is amino-acid biosynthesis; L-arginine biosynthesis; L-ornithine and N-acetyl-L-glutamate from L-glutamate and N(2)-acetyl-L-ornithine (cyclic): step 1/1. The protein operates within amino-acid biosynthesis; L-arginine biosynthesis; N(2)-acetyl-L-ornithine from L-glutamate: step 1/4. In terms of biological role, catalyzes two activities which are involved in the cyclic version of arginine biosynthesis: the synthesis of acetylglutamate from glutamate and acetyl-CoA, and of ornithine by transacetylation between acetylornithine and glutamate. This chain is Arginine biosynthesis bifunctional protein ArgJ, chloroplastic, found in Zea mays (Maize).